The following is a 79-amino-acid chain: Putative antitoxin MM_2475 (79 aa).

The protein belongs to the UPF0330 family.

Functionally, possibly the antitoxin component of a type II toxin-antitoxin (TA) system. The sequence is that of Putative antitoxin MM_2475 from Methanosarcina mazei (strain ATCC BAA-159 / DSM 3647 / Goe1 / Go1 / JCM 11833 / OCM 88) (Methanosarcina frisia).